A 132-amino-acid polypeptide reads, in one-letter code: Small ribosomal subunit protein uS8 (132 aa).

Belongs to the universal ribosomal protein uS8 family. In terms of assembly, part of the 30S ribosomal subunit. Contacts proteins S5 and S12.

In terms of biological role, one of the primary rRNA binding proteins, it binds directly to 16S rRNA central domain where it helps coordinate assembly of the platform of the 30S subunit. In Clostridium kluyveri (strain NBRC 12016), this protein is Small ribosomal subunit protein uS8.